The chain runs to 227 residues: 7-cyano-7-deazaguanine synthase (227 aa).

Position 7 to 17 (7 to 17 (LSGGMDSLVTT)) interacts with ATP. Positions 187, 195, 198, and 201 each coordinate Zn(2+).

The protein belongs to the QueC family. Requires Zn(2+) as cofactor.

The enzyme catalyses 7-carboxy-7-deazaguanine + NH4(+) + ATP = 7-cyano-7-deazaguanine + ADP + phosphate + H2O + H(+). It participates in purine metabolism; 7-cyano-7-deazaguanine biosynthesis. Functionally, catalyzes the ATP-dependent conversion of 7-carboxy-7-deazaguanine (CDG) to 7-cyano-7-deazaguanine (preQ(0)). This Chlorobium luteolum (strain DSM 273 / BCRC 81028 / 2530) (Pelodictyon luteolum) protein is 7-cyano-7-deazaguanine synthase.